Consider the following 440-residue polypeptide: Platelet-activating factor acetylhydrolase (440 aa).

The signal sequence occupies residues 1–21 (MVPLKLQALFCLLCCLPWVHP). N-linked (GlcNAc...) asparagine glycosylation is found at Asn-59, Asn-75, and Asn-199. Catalysis depends on Ser-272, which acts as the Nucleophile. Active-site charge relay system residues include Asp-295 and His-350.

The protein belongs to the AB hydrolase superfamily. Lipase family. N-glycosylated. In terms of tissue distribution, plasma.

It localises to the secreted. The protein resides in the extracellular space. It carries out the reaction a 1-O-alkyl-2-acetyl-sn-glycero-3-phosphocholine + H2O = a 1-O-alkyl-sn-glycero-3-phosphocholine + acetate + H(+). It catalyses the reaction 1-O-decyl-2-acetyl-sn-glycero-3-phosphocholine + H2O = 1-O-decyl-sn-glycero-3-phosphocholine + acetate + H(+). The enzyme catalyses 1-O-dodecyl-2-acetyl-sn-glycero-3-phosphocholine + H2O = 1-O-dodecyl-sn-glycero-3-phosphocholine + acetate + H(+). The catalysed reaction is 1-O-tetradecyl-2-acetyl-sn-glycero-3-phosphocholine + H2O = 1-O-tetradecyl-sn-glycero-3-phosphocholine + acetate + H(+). It carries out the reaction 1-O-hexadecyl-2-acetyl-sn-glycero-3-phosphocholine + H2O = 1-O-hexadecyl-sn-glycero-3-phosphocholine + acetate + H(+). It catalyses the reaction 1-O-octadecyl-2-acetyl-sn-glycero-3-phosphocholine + H2O = 1-O-octadecyl-sn-glycero-3-phosphocholine + acetate + H(+). The enzyme catalyses 1-hexadecanoyl-2-acetyl-sn-glycero-3-phosphocholine + H2O = 1-hexadecanoyl-sn-glycero-3-phosphocholine + acetate + H(+). The catalysed reaction is 1-hexadecanoyl-2-propionyl-sn-glycero-3-phosphocholine + H2O = propanoate + 1-hexadecanoyl-sn-glycero-3-phosphocholine + H(+). It carries out the reaction 1-hexadecanoyl-2-butanoyl-sn-glycero-3-phosphocholine + H2O = butanoate + 1-hexadecanoyl-sn-glycero-3-phosphocholine + H(+). It catalyses the reaction 1-hexadecanoyl-2-pentanoyl-sn-glycero-3-phosphocholine + H2O = pentanoate + 1-hexadecanoyl-sn-glycero-3-phosphocholine + H(+). The enzyme catalyses 1-hexadecanoyl-2-glutaroyl-sn-glycero-3-phosphocholine + H2O = glutarate + 1-hexadecanoyl-sn-glycero-3-phosphocholine + H(+). The catalysed reaction is 1-hexadecanoyl-2-(5-oxopentanoyl)-sn-glycero-3-phosphocholine + H2O = 5-oxopentanoate + 1-hexadecanoyl-sn-glycero-3-phosphocholine + H(+). It carries out the reaction 1-hexadecanoyl-2-(9-oxononanoyl)-sn-glycero-3-phosphocholine + H2O = 9-oxononanoate + 1-hexadecanoyl-sn-glycero-3-phosphocholine + H(+). It catalyses the reaction 1-hexadecanoyl-2-[9-hydroperoxy-(10E-octadecenoyl)]-sn-glycero-3-phosphocholine + H2O = 9-hydroperoxy-10E-octadecenoate + 1-hexadecanoyl-sn-glycero-3-phosphocholine + H(+). The enzyme catalyses 1-hexadecanoyl-2-(10-hydroperoxy-8E-octadecenoyl)-sn-glycero-3-phosphocholine + H2O = 10-hydroperoxy-(8E)-octadecenoate + 1-hexadecanoyl-sn-glycero-3-phosphocholine + H(+). In terms of biological role, lipoprotein-associated calcium-independent phospholipase A2 involved in phospholipid catabolism during inflammatory and oxidative stress response. At the lipid-aqueous interface, hydrolyzes the ester bond of fatty acyl group attached at sn-2 position of phospholipids (phospholipase A2 activity). Specifically targets phospholipids with a short-chain fatty acyl group at sn-2 position. Can hydrolyze phospholipids with long fatty acyl chains, only if they carry oxidized functional groups. Hydrolyzes and inactivates platelet-activating factor (PAF, 1-O-alkyl-2-acetyl-sn-glycero-3-phosphocholine), a potent pro-inflammatory signaling lipid that acts through PTAFR on various innate immune cells. Hydrolyzes oxidatively truncated phospholipids carrying an aldehyde group at omega position, preventing their accumulation in lipoprotein particles and uncontrolled pro-inflammatory effects. As part of high-density lipoprotein (HDL) particles, can hydrolyze phospholipids having long-chain fatty acyl hydroperoxides at sn-2 position and protect against potential accumulation of these oxylipins in the vascular wall. Catalyzes the release from membrane phospholipids of F2-isoprostanes, lipid biomarkers of cellular oxidative damage. The protein is Platelet-activating factor acetylhydrolase (Pla2g7) of Mus musculus (Mouse).